Consider the following 122-residue polypeptide: Histone H2B.1 (122 aa).

The span at 1 to 10 shows a compositional bias: low complexity; that stretch reads MAPKKAPAAA. The interval 1 to 28 is disordered; it reads MAPKKAPAAAAEKKVKKAPTTEKKNKKK. A2 is modified (n,N,N-trimethylalanine). N6-acetyllysine occurs at positions 5 and 42. K116 is covalently cross-linked (Glycyl lysine isopeptide (Lys-Gly) (interchain with G-Cter in ubiquitin)).

The protein belongs to the histone H2B family. The nucleosome is a histone octamer containing two molecules each of H2A, H2B, H3 and H4 assembled in one H3-H4 heterotetramer and two H2A-H2B heterodimers. The octamer wraps approximately 147 bp of DNA. Post-translationally, acetylation occurs almost exclusively in the MAC. In terms of processing, monoubiquitination to form H2BK115ub1 gives a specific tag for epigenetic transcriptional activation and is also prerequisite for H3K4me and H3K79me formation.

The protein localises to the nucleus. The protein resides in the chromosome. Functionally, core component of nucleosome. Nucleosomes wrap and compact DNA into chromatin, limiting DNA accessibility to the cellular machineries which require DNA as a template. Histones thereby play a central role in transcription regulation, DNA repair, DNA replication and chromosomal stability. DNA accessibility is regulated via a complex set of post-translational modifications of histones, also called histone code, and nucleosome remodeling. In Tetrahymena thermophila (strain SB210), this protein is Histone H2B.1 (HTB1).